We begin with the raw amino-acid sequence, 210 residues long: Putative biopolymer transport protein ExbB-like 3 (210 aa).

Transmembrane regions (helical) follow at residues 2–22 (AGGI…ALII), 104–124 (LFQT…ILGL), and 152–172 (LVST…ANVF).

This sequence belongs to the ExbB/TolQ family.

Its subcellular location is the cell inner membrane. In terms of biological role, involved in the TonB-dependent energy-dependent transport of various receptor-bound substrates. Protects ExbD from proteolytic degradation and functionally stabilizes TonB. The chain is Putative biopolymer transport protein ExbB-like 3 from Synechocystis sp. (strain ATCC 27184 / PCC 6803 / Kazusa).